We begin with the raw amino-acid sequence, 382 residues long: Lipid-A-disaccharide synthase (382 aa).

Belongs to the LpxB family.

The catalysed reaction is a lipid X + a UDP-2-N,3-O-bis[(3R)-3-hydroxyacyl]-alpha-D-glucosamine = a lipid A disaccharide + UDP + H(+). It functions in the pathway bacterial outer membrane biogenesis; LPS lipid A biosynthesis. Its function is as follows. Condensation of UDP-2,3-diacylglucosamine and 2,3-diacylglucosamine-1-phosphate to form lipid A disaccharide, a precursor of lipid A, a phosphorylated glycolipid that anchors the lipopolysaccharide to the outer membrane of the cell. The sequence is that of Lipid-A-disaccharide synthase from Dechloromonas aromatica (strain RCB).